The sequence spans 229 residues: Ribonuclease T (229 aa).

One can recognise an Exonuclease domain in the interval 23–197 (VIIDVETAGF…YDTERTAKLF (175 aa)). Mg(2+) contacts are provided by aspartate 26, glutamate 28, histidine 184, and aspartate 189. Histidine 184 acts as the Proton donor/acceptor in catalysis.

The protein belongs to the RNase T family. As to quaternary structure, homodimer. The cofactor is Mg(2+).

Functionally, trims short 3' overhangs of a variety of RNA species, leaving a one or two nucleotide 3' overhang. Responsible for the end-turnover of tRNA: specifically removes the terminal AMP residue from uncharged tRNA (tRNA-C-C-A). Also appears to be involved in tRNA biosynthesis. The chain is Ribonuclease T from Haemophilus influenzae (strain PittGG).